A 190-amino-acid chain; its full sequence is Elongation factor P-like protein (190 aa).

It belongs to the elongation factor P family.

This chain is Elongation factor P-like protein, found in Citrobacter koseri (strain ATCC BAA-895 / CDC 4225-83 / SGSC4696).